Reading from the N-terminus, the 327-residue chain is Urease accessory protein UreD (327 aa).

Belongs to the UreD family. As to quaternary structure, ureD, UreF and UreG form a complex that acts as a GTP-hydrolysis-dependent molecular chaperone, activating the urease apoprotein by helping to assemble the nickel containing metallocenter of UreC. The UreE protein probably delivers the nickel.

The protein resides in the cytoplasm. Functionally, required for maturation of urease via the functional incorporation of the urease nickel metallocenter. This is Urease accessory protein UreD from Yersinia enterocolitica serotype O:8 / biotype 1B (strain NCTC 13174 / 8081).